The primary structure comprises 406 residues: Tryptophan 2,3-dioxygenase (406 aa).

Substrate-binding positions include 72-76 (FIVTH) and R144. Residue H328 coordinates heme. T342 lines the substrate pocket.

It belongs to the tryptophan 2,3-dioxygenase family. In terms of assembly, homotetramer. Dimer of dimers. Heme is required as a cofactor.

The catalysed reaction is L-tryptophan + O2 = N-formyl-L-kynurenine. It participates in amino-acid degradation; L-tryptophan degradation via kynurenine pathway; L-kynurenine from L-tryptophan: step 1/2. Its function is as follows. Heme-dependent dioxygenase that catalyzes the oxidative cleavage of the L-tryptophan (L-Trp) pyrrole ring and converts L-tryptophan to N-formyl-L-kynurenine. Catalyzes the oxidative cleavage of the indole moiety. This is Tryptophan 2,3-dioxygenase from Xenopus tropicalis (Western clawed frog).